Consider the following 419-residue polypeptide: L-rhamnose isomerase (419 aa).

Positions 262, 294, and 296 each coordinate Mn(2+).

Belongs to the rhamnose isomerase family. In terms of assembly, homotetramer. It depends on Mn(2+) as a cofactor.

It localises to the cytoplasm. The enzyme catalyses L-rhamnopyranose = L-rhamnulose. It functions in the pathway carbohydrate degradation; L-rhamnose degradation; glycerone phosphate from L-rhamnose: step 1/3. Catalyzes the interconversion of L-rhamnose and L-rhamnulose. The chain is L-rhamnose isomerase from Escherichia coli O9:H4 (strain HS).